A 253-amino-acid polypeptide reads, in one-letter code: Coenzyme F420:L-glutamate ligase (253 aa).

GTP contacts are provided by residues 9–12 (LPEI), 38–39 (ST), and K43. A divalent metal cation is bound at residue D113. A GTP-binding site is contributed by N116. A divalent metal cation contacts are provided by D150, T151, and E208. 206-213 (SGEGDDGT) lines the GTP pocket.

It belongs to the CofE family. As to quaternary structure, homodimer. Requires Mg(2+) as cofactor. The cofactor is Mn(2+). It depends on K(+) as a cofactor.

It catalyses the reaction oxidized coenzyme F420-0 + GTP + L-glutamate = oxidized coenzyme F420-1 + GDP + phosphate + H(+). The catalysed reaction is oxidized coenzyme F420-1 + GTP + L-glutamate = oxidized coenzyme F420-2 + GDP + phosphate + H(+). The protein operates within cofactor biosynthesis; coenzyme F420 biosynthesis. Catalyzes the GTP-dependent successive addition of two or more gamma-linked L-glutamates to the L-lactyl phosphodiester of 7,8-didemethyl-8-hydroxy-5-deazariboflavin (F420-0) to form coenzyme F420-0-glutamyl-glutamate (F420-2) or polyglutamated F420 derivatives. The sequence is that of Coenzyme F420:L-glutamate ligase from Halobacterium salinarum (strain ATCC 29341 / DSM 671 / R1).